Consider the following 251-residue polypeptide: DNA repair protein RecO (251 aa).

Belongs to the RecO family.

Involved in DNA repair and RecF pathway recombination. The polypeptide is DNA repair protein RecO (Lactococcus lactis subsp. cremoris (strain MG1363)).